A 417-amino-acid chain; its full sequence is Serine hydroxymethyltransferase (417 aa).

(6S)-5,6,7,8-tetrahydrofolate is bound by residues Leu116 and 120-122; that span reads GHL. Lys225 bears the N6-(pyridoxal phosphate)lysine mark.

It belongs to the SHMT family. In terms of assembly, homodimer. Pyridoxal 5'-phosphate is required as a cofactor.

The protein localises to the cytoplasm. It catalyses the reaction (6R)-5,10-methylene-5,6,7,8-tetrahydrofolate + glycine + H2O = (6S)-5,6,7,8-tetrahydrofolate + L-serine. The protein operates within one-carbon metabolism; tetrahydrofolate interconversion. It participates in amino-acid biosynthesis; glycine biosynthesis; glycine from L-serine: step 1/1. Its function is as follows. Catalyzes the reversible interconversion of serine and glycine with tetrahydrofolate (THF) serving as the one-carbon carrier. This reaction serves as the major source of one-carbon groups required for the biosynthesis of purines, thymidylate, methionine, and other important biomolecules. Also exhibits THF-independent aldolase activity toward beta-hydroxyamino acids, producing glycine and aldehydes, via a retro-aldol mechanism. This is Serine hydroxymethyltransferase from Hydrogenobaculum sp. (strain Y04AAS1).